The following is a 203-amino-acid chain: Pyridoxine/pyridoxamine 5'-phosphate oxidase (203 aa).

Residues 50-55, 65-66, Lys-72, and Gln-94 each bind FMN; these read RMVLLK and YT. Lys-55 is a binding site for substrate. Residues Tyr-112, Arg-116, and Ser-120 each contribute to the substrate site. FMN-binding positions include 129–130 and Trp-174; that span reads QS. Residue 180–182 participates in substrate binding; it reads RLH. An FMN-binding site is contributed by Arg-184.

The protein belongs to the pyridoxamine 5'-phosphate oxidase family. As to quaternary structure, homodimer. The cofactor is FMN.

The catalysed reaction is pyridoxamine 5'-phosphate + O2 + H2O = pyridoxal 5'-phosphate + H2O2 + NH4(+). It catalyses the reaction pyridoxine 5'-phosphate + O2 = pyridoxal 5'-phosphate + H2O2. It participates in cofactor metabolism; pyridoxal 5'-phosphate salvage; pyridoxal 5'-phosphate from pyridoxamine 5'-phosphate: step 1/1. Its pathway is cofactor metabolism; pyridoxal 5'-phosphate salvage; pyridoxal 5'-phosphate from pyridoxine 5'-phosphate: step 1/1. In terms of biological role, catalyzes the oxidation of either pyridoxine 5'-phosphate (PNP) or pyridoxamine 5'-phosphate (PMP) into pyridoxal 5'-phosphate (PLP). The sequence is that of Pyridoxine/pyridoxamine 5'-phosphate oxidase from Brucella anthropi (strain ATCC 49188 / DSM 6882 / CCUG 24695 / JCM 21032 / LMG 3331 / NBRC 15819 / NCTC 12168 / Alc 37) (Ochrobactrum anthropi).